The sequence spans 391 residues: DNA-directed RNA polymerase subunit Rpo1C (391 aa).

Belongs to the RNA polymerase beta' chain family. In terms of assembly, part of the RNA polymerase complex.

The protein localises to the cytoplasm. It catalyses the reaction RNA(n) + a ribonucleoside 5'-triphosphate = RNA(n+1) + diphosphate. In terms of biological role, DNA-dependent RNA polymerase (RNAP) catalyzes the transcription of DNA into RNA using the four ribonucleoside triphosphates as substrates. Forms part of the jaw domain. The polypeptide is DNA-directed RNA polymerase subunit Rpo1C (Thermococcus gammatolerans (strain DSM 15229 / JCM 11827 / EJ3)).